The primary structure comprises 207 residues: Ribosomal RNA small subunit methyltransferase G (207 aa).

Residues Gly-75, Phe-80, 126 to 127 (LE), and Arg-140 each bind S-adenosyl-L-methionine.

Belongs to the methyltransferase superfamily. RNA methyltransferase RsmG family.

Its subcellular location is the cytoplasm. It carries out the reaction guanosine(527) in 16S rRNA + S-adenosyl-L-methionine = N(7)-methylguanosine(527) in 16S rRNA + S-adenosyl-L-homocysteine. In terms of biological role, specifically methylates the N7 position of guanine in position 527 of 16S rRNA. This Erythrobacter litoralis (strain HTCC2594) protein is Ribosomal RNA small subunit methyltransferase G.